We begin with the raw amino-acid sequence, 105 residues long: Phosphoribosyl-AMP cyclohydrolase (105 aa).

Aspartate 72 lines the Mg(2+) pocket. Cysteine 73 is a binding site for Zn(2+). Mg(2+) contacts are provided by aspartate 74 and aspartate 76. Positions 89 and 96 each coordinate Zn(2+).

Belongs to the PRA-CH family. In terms of assembly, homodimer. Requires Mg(2+) as cofactor. The cofactor is Zn(2+).

It is found in the cytoplasm. It catalyses the reaction 1-(5-phospho-beta-D-ribosyl)-5'-AMP + H2O = 1-(5-phospho-beta-D-ribosyl)-5-[(5-phospho-beta-D-ribosylamino)methylideneamino]imidazole-4-carboxamide. The protein operates within amino-acid biosynthesis; L-histidine biosynthesis; L-histidine from 5-phospho-alpha-D-ribose 1-diphosphate: step 3/9. In terms of biological role, catalyzes the hydrolysis of the adenine ring of phosphoribosyl-AMP. In Listeria monocytogenes serotype 4a (strain HCC23), this protein is Phosphoribosyl-AMP cyclohydrolase.